The sequence spans 456 residues: Glycerol-3-phosphate acyltransferase 4 (456 aa).

The N-terminal stretch at 1 to 37 (MFLLLPFDSLIVSLLGISLTVLFTLLLVFIIVPAVFG) is a signal peptide. Helical transmembrane passes span 156 to 176 (ISLR…CLLL) and 180 to 200 (IALA…VGYL). A glycan (N-linked (GlcNAc...) asparagine) is linked at Asn247. The HXXXXD motif motif lies at 248–253 (HTSPID). N-linked (GlcNAc...) asparagine glycosylation is found at Asn327, Asn328, and Asn362.

The protein belongs to the 1-acyl-sn-glycerol-3-phosphate acyltransferase family.

Its subcellular location is the endoplasmic reticulum membrane. The enzyme catalyses sn-glycerol 3-phosphate + an acyl-CoA = a 1-acyl-sn-glycero-3-phosphate + CoA. The catalysed reaction is dodecanoyl-CoA + sn-glycerol 3-phosphate = 1-dodecanoyl-sn-glycerol 3-phosphate + CoA. It carries out the reaction sn-glycerol 3-phosphate + hexadecanoyl-CoA = 1-hexadecanoyl-sn-glycero-3-phosphate + CoA. It catalyses the reaction sn-glycerol 3-phosphate + octadecanoyl-CoA = 1-octadecanoyl-sn-glycero-3-phosphate + CoA. The enzyme catalyses sn-glycerol 3-phosphate + (9Z)-octadecenoyl-CoA = 1-(9Z-octadecenoyl)-sn-glycero-3-phosphate + CoA. The catalysed reaction is (9Z,12Z)-octadecadienoyl-CoA + sn-glycerol 3-phosphate = 1-(9Z,12Z)-octadecadienoyl-sn-glycero-3-phosphate + CoA. It participates in phospholipid metabolism; CDP-diacylglycerol biosynthesis; CDP-diacylglycerol from sn-glycerol 3-phosphate: step 1/3. In terms of biological role, converts glycerol-3-phosphate to 1-acyl-sn-glycerol-3-phosphate (lysophosphatidic acid or LPA) by incorporating an acyl moiety at the sn-1 position of the glycerol backbone. Active against both saturated and unsaturated long-chain fatty acyl-CoAs. Protects cells against lipotoxicity. This is Glycerol-3-phosphate acyltransferase 4 from Bos taurus (Bovine).